A 239-amino-acid chain; its full sequence is Ribosomal RNA small subunit methyltransferase G (239 aa).

S-adenosyl-L-methionine is bound by residues glycine 79, phenylalanine 84, 130–131 (AE), and arginine 149.

It belongs to the methyltransferase superfamily. RNA methyltransferase RsmG family.

It is found in the cytoplasm. Functionally, specifically methylates the N7 position of a guanine in 16S rRNA. This is Ribosomal RNA small subunit methyltransferase G from Lactobacillus delbrueckii subsp. bulgaricus (strain ATCC 11842 / DSM 20081 / BCRC 10696 / JCM 1002 / NBRC 13953 / NCIMB 11778 / NCTC 12712 / WDCM 00102 / Lb 14).